A 238-amino-acid chain; its full sequence is 3-dehydroquinate dehydratase (238 aa).

3-dehydroquinate-binding positions include 35–37 and arginine 70; that span reads ELR. Residue histidine 133 is the Proton donor/acceptor of the active site. Lysine 160 (schiff-base intermediate with substrate) is an active-site residue. 3-dehydroquinate contacts are provided by arginine 202 and glutamine 225.

This sequence belongs to the type-I 3-dehydroquinase family. Homodimer.

The enzyme catalyses 3-dehydroquinate = 3-dehydroshikimate + H2O. It participates in metabolic intermediate biosynthesis; chorismate biosynthesis; chorismate from D-erythrose 4-phosphate and phosphoenolpyruvate: step 3/7. Functionally, involved in the third step of the chorismate pathway, which leads to the biosynthesis of aromatic amino acids. Catalyzes the cis-dehydration of 3-dehydroquinate (DHQ) and introduces the first double bond of the aromatic ring to yield 3-dehydroshikimate. In Staphylococcus aureus (strain Mu3 / ATCC 700698), this protein is 3-dehydroquinate dehydratase.